A 98-amino-acid polypeptide reads, in one-letter code: MSLVYMNIMMAFTVSLTGLLMYRSHLMSSLLCLEGMMLSLFILATLMILNSHFTLASMMPIILLVFAACEAALGLSLLVMVSNTYGTDYVQNLNLLQC.

Helical transmembrane passes span 1–21, 29–49, and 61–81; these read MSLV…GLLM, SLLC…LMIL, and IILL…LVMV.

The protein belongs to the complex I subunit 4L family. Core subunit of respiratory chain NADH dehydrogenase (Complex I) which is composed of 45 different subunits.

The protein resides in the mitochondrion inner membrane. The enzyme catalyses a ubiquinone + NADH + 5 H(+)(in) = a ubiquinol + NAD(+) + 4 H(+)(out). Functionally, core subunit of the mitochondrial membrane respiratory chain NADH dehydrogenase (Complex I) which catalyzes electron transfer from NADH through the respiratory chain, using ubiquinone as an electron acceptor. Part of the enzyme membrane arm which is embedded in the lipid bilayer and involved in proton translocation. The polypeptide is NADH-ubiquinone oxidoreductase chain 4L (MT-ND4L) (Ovis aries (Sheep)).